The following is a 320-amino-acid chain: Methylenetetrahydrofolate dehydrogenase [NAD(+)] (320 aa).

The active site involves C150. NAD(+) is bound by residues 185 to 186, 208 to 209, and 274 to 276; these read RS, DV, and FAC.

It belongs to the tetrahydrofolate dehydrogenase/cyclohydrolase family. As to quaternary structure, homodimer. Post-translationally, the N-terminus is blocked.

It is found in the cytoplasm. The protein resides in the nucleus. It carries out the reaction (6R)-5,10-methylene-5,6,7,8-tetrahydrofolate + NAD(+) = (6R)-5,10-methenyltetrahydrofolate + NADH. Its function is as follows. Catalyzes oxidation of cytoplasmic one-carbon units for purine biosynthesis. This chain is Methylenetetrahydrofolate dehydrogenase [NAD(+)] (MTD1), found in Saccharomyces cerevisiae (strain ATCC 204508 / S288c) (Baker's yeast).